Reading from the N-terminus, the 391-residue chain is Processive diacylglycerol beta-glucosyltransferase (391 aa).

The protein belongs to the glycosyltransferase 28 family. UgtP subfamily.

The protein resides in the cell membrane. The catalysed reaction is a 1,2-diacyl-3-O-(beta-D-glucopyranosyl)-sn-glycerol + UDP-alpha-D-glucose = a 1,2-diacyl-3-O-(beta-D-Glc-(1-&gt;6)-beta-D-Glc)-sn-glycerol + UDP + H(+). It carries out the reaction a 1,2-diacyl-sn-glycerol + UDP-alpha-D-glucose = a 1,2-diacyl-3-O-(beta-D-glucopyranosyl)-sn-glycerol + UDP + H(+). It participates in glycolipid metabolism; diglucosyl-diacylglycerol biosynthesis. Functionally, processive glucosyltransferase involved in the biosynthesis of both the bilayer- and non-bilayer-forming membrane glucolipids. Is able to successively transfer two glucosyl residues to diacylglycerol (DAG), thereby catalyzing the formation of beta-monoglucosyl-DAG (3-O-(beta-D-glucopyranosyl)-1,2-diacyl-sn-glycerol) and beta-diglucosyl-DAG (3-O-(beta-D-glucopyranosyl-beta-(1-&gt;6)-D-glucopyranosyl)-1,2-diacyl-sn-glycerol). Beta-diglucosyl-DAG is the predominant glycolipid found in Bacillales and is also used as a membrane anchor for lipoteichoic acid (LTA). This is Processive diacylglycerol beta-glucosyltransferase from Staphylococcus aureus (strain Mu3 / ATCC 700698).